A 328-amino-acid chain; its full sequence is MPLHNLTRFPRLEFIGAPTPLEYLPRFSDYLGREIFIKRDDVTPMAMGGNKLRKLEFLAADALREGADTLITAGAIQSNHVRQTAAVAAKLGLHCVALLENPIGTTAENYLTNGNRLLLDLFNTQIEMCDALTDPNTQLEELATRVEAQGFRPYVIPVGGSNALGALGYVESALEIAQQCEGAVNISSVVVASGSAGTHAGLAVGLEHLMPESELIGVTVSRSVADQLPKVVNLQQAIAKELELTASAEILLWDDYFAPGYGVPNDEGMEAVKLLARLEGILLDPVYTGKAMAGLIDGISQKRFKDEGPILFIHTGGAPALFAYHPHV.

Lys-51 is subject to N6-(pyridoxal phosphate)lysine.

The protein belongs to the ACC deaminase/D-cysteine desulfhydrase family. As to quaternary structure, homodimer. It depends on pyridoxal 5'-phosphate as a cofactor.

The catalysed reaction is D-cysteine + H2O = hydrogen sulfide + pyruvate + NH4(+) + H(+). Functionally, catalyzes the alpha,beta-elimination reaction of D-cysteine and of several D-cysteine derivatives. It could be a defense mechanism against D-cysteine. This Escherichia coli (strain UTI89 / UPEC) protein is D-cysteine desulfhydrase.